The chain runs to 293 residues: Ribosomal protein L11 methyltransferase (293 aa).

The S-adenosyl-L-methionine site is built by Thr145, Gly166, Asp188, and Asn230.

It belongs to the methyltransferase superfamily. PrmA family.

It localises to the cytoplasm. It carries out the reaction L-lysyl-[protein] + 3 S-adenosyl-L-methionine = N(6),N(6),N(6)-trimethyl-L-lysyl-[protein] + 3 S-adenosyl-L-homocysteine + 3 H(+). Methylates ribosomal protein L11. The chain is Ribosomal protein L11 methyltransferase from Shewanella denitrificans (strain OS217 / ATCC BAA-1090 / DSM 15013).